Here is a 156-residue protein sequence, read N- to C-terminus: MKPGEKQEQLVKAFKALLREERFGSQAEIVTALNEIGFENINQSKVSRMLSRFGAVRTRNAKMEMVYCLPVELGIPTINSPLKNLVLDVDHNGVILVIHTTPGAAQLIARMLDSLGKAEGILGTIAGDDTIFITPTAESDIDELYDSVLELFEHTG.

It belongs to the ArgR family.

It localises to the cytoplasm. Its pathway is amino-acid biosynthesis; L-arginine biosynthesis [regulation]. Functionally, regulates arginine biosynthesis genes. This chain is Arginine repressor, found in Tolumonas auensis (strain DSM 9187 / NBRC 110442 / TA 4).